The primary structure comprises 1076 residues: Enhancer of mRNA-decapping protein 4-like protein pdc1 (1076 aa).

2 stretches are compositionally biased toward low complexity: residues 1–19 and 53–69; these read MNEQ…LPNL and SSLL…SNQS. Disordered stretches follow at residues 1 to 82, 95 to 127, and 139 to 204; these read MNEQ…ASHS, GAKP…FNPV, and STGP…AEEQ. Residues 70 to 82 are compositionally biased toward polar residues; sequence PSNSGPKYYASHS. A compositionally biased stretch (polar residues) spans 153-173; the sequence is NDSQDTAFQSSRNMPSDTSVA. Over residues 174 to 184 the composition is skewed to low complexity; the sequence is SPDYSHSQSSS. Residues 185–195 are compositionally biased toward polar residues; it reads PIANYQESGNS. WD repeat units lie at residues 292–334 and 402–441; these read NSPN…STSE and DTGI…PSTP. 2 disordered regions span residues 666–714 and 892–934; these read RHST…SPSS and TAPD…PAQG. Polar residues predominate over residues 669-688; that stretch reads TASPSTVNSGFSTPRSQATG. Phosphoserine occurs at positions 671 and 673. Thr674 bears the Phosphothreonine mark. The span at 695–706 shows a compositional bias: basic and acidic residues; sequence DKGERFETKDKS. The segment at 789 to 1076 is interaction with dcp2; that stretch reads MQVALKEEIA…ISEISVASSN (288 aa). The residue at position 1075 (Ser1075) is a Phosphoserine.

This sequence belongs to the WD repeat EDC4 family. Interacts with dcp2; via C-terminus.

The protein localises to the cytoplasm. Its subcellular location is the P-body. Functionally, involved in P-body formation. Acts as a functional homolog of human EDC4, which plays a role in mRNA decapping in the process of mRNA degradation. Enhances the decapping activity of dcp2. Together with edc3, acts as a scaffolding protein sufficient for the phase transition of the components of the 5' to 3' mRNA degradation machinery to form P-bodies. Intermolecular interactions between the edc3 Sm domain and at least 10 helical leucine-rich motifs in dcp2 and pdc1 build the core of the interaction network of this spontaneous clustering process. The polypeptide is Enhancer of mRNA-decapping protein 4-like protein pdc1 (Schizosaccharomyces pombe (strain 972 / ATCC 24843) (Fission yeast)).